Here is a 2610-residue protein sequence, read N- to C-terminus: MADVDPDTLLEWLQMGQGDERDMQLIALEQLCMLLLMSDNVDRCFETCPPRTFLPALCKIFLDESAPDNVLEVTARAITYYLDVSAECTRRIVGVDGAIKALCNRLVVVELNNRTSRDLAEQCVKVLELICTRESGAVFEAGGLNCVLTFIRDSGHLVHKDTLHSAMAVVSRLCGKMEPQDSSLEICVESLSSLLKHEDHQVSDGALRCFASLADRFTRRGVDPAPLAKHGLTEELLSRMAAAGGTVSGPSSACKPGRSTTGAPSTTADSKLSNQVSTIVSLLSTLCRGSPVVTHDLLRSELPDSIESALQGDERCVLDTMRLVDLLLVLLFEGRKALPKSSAGSTGRIPGLRRLDSSGERSHRQLIDCIRSKDTDALIDAIDTGAFEVNFMDDVGQTLLNWASAFGTQEMVEFLCERGADVNRGQRSSSLHYAACFGRPQVAKTLLRHGANPDLRDEDGKTPLDKARERGHSEVVAILQSPGDWMCPVNKGDDKKKKDTNKDEEECNEPKGDPEMAPIYLKRLLPVFAQTFQQTMLPSIRKASLALIRKMIHFCSEALLKEVCDSDVGHNLPTILVEITATVLDQEDDDDGHLLALQIIRDLVDKGGDIFLDQLARLGVISKVSTLAGPSSDDENEEESKPEKEDEPQEDAKELQQGKPYHWRDWSIIRGRDCLYIWSDAAALELSNGSNGWFRFILDGKLATMYSSGSPEGGSDSSESRSEFLEKLQRARGQVKPSTSSQPILSAPGPTKLTVGNWSLTCLKEGEIAIHNSDGQQATILKEDLPGFVFESNRGTKHSFTAETSLGSEFVTGWTGKRGRKLKSKLEKTKQKVRTMARDLYDDHFKAVESMPRGVVVTLRNIATQLESSWELHTNRQCIESENTWRDLMKTALENLIVLLKDENTISPYEMCSSGLVQALLTVLNNSMDLDMKQDCSQLVERINVFKTAFSENEDDESRPAVALIRKLIAVLESIERLPLHLYDTPGSTYNLQILTRRLRFRLERAPGETALIDRTGRMLKMEPLATVESLEQYLLKMVAKQWYDFDRSSFVFVRKLREGQNFIFRHQHDFDENGIIYWIGTNAKTAYEWVNPAAYGLVVVTSSEGRNLPYGRLEDILSRDNSALNCHSNDDKNAWFAIDLGLWVIPSAYTLRHARGYGRSALRNWVFQVSKDGQNWTSLYTHVDDCSLNEPGSTATWPLDPPKDEKQGWRHVRIKQMGKNASGQTHYLSLSGFELYGTVNGVCEDQLGKAAKEAEANLRRQRRLVRSQVLKYMVPGARVIRGLDWKWRDQDGSPQGEGTVTGELHNGWIDVTWDAGGSNSYRMGAEGKFDLKLAPGYDPDTVASPKPVSSTVSGTTQSWSSLVKNNCPDKTSAAAGSSSRKGSSSSVCSVASSSDISLGSTKTERRSEIVMEHSIVSGADVHEPIVVLSSAENVPQTEVGSSSSASTSTLTAETGSENAERKLGPDSSVRTPGESSAISMGIVSVSSPDVSSVSELTNKEAASQRPLSSSASNRLSVSSLLAAGAPMSSSASVPNLSSRETSSLESFVRRVANIARTNATNNMNLSRSSSDNNTNTLGRNVMSTATSPLMGAQSFPNLTTPGTTSTVTMSTSSVTSSSNVATATTVLSVGQSLSNTLTTSLTSTSSESDTGQEAEYSLYDFLDSCRASTLLAELDDDEDLPEPDEEDDENEDDNQEDQEYEEVMILRRPSLQRRAGSRSDVTHHAVTSQLPQVPAGAGSRPIGEQEEEEYETKGGRRRTWDDDYVLKRQFSALVPAFDPRPGRTNVQQTTDLEIPPPGTPHSELLEEVECTPSPRLALTLKVTGLGTTREVELPLTNFRSTIFYYVQKLLQLSCNGNVKSDKLRRIWEPTYTIMYREMKDSDKEKENGKMGCWSIEHVEQYLGTDELPKNDLITYLQKNADAAFLRHWKLTGTNKSIRKNRNCSQLIAAYKDFCEHGTKSGLNQGAISTLQSSDILNLTKEQPQAKAGNGQNSCGVEDVLQLLRILYIVASDPYSRISQEDGDEQPQFTFPPDEFTSKKITTKILQQIEEPLALASGALPDWCEQLTSKCPFLIPFETRQLYFTCTAFGASRAIVWLQNRREATVERTRTTSSVRRDDPGEFRVGRLKHERVKVPRGESLMEWAENVMQIHADRKSVLEVEFLGEEGTGLGPTLEFYALVAAEFQRTDLGAWLCDDNFPDDESRHVDLGGGLKPPGYYVQRSCGLFTAPFPQDSDELERITKLFHFLGIFLAKCIQDNRLVDLPISKPFFKLMCMGDIKSNMSKLIYESRGDRDLHCTESQSEASTEEGHDSLSVGSFEEDSKSEFILDPPKPKPPAWFNGILTWEDFELVNPHRARFLKEIKDLAIKRRQILSNKGLSEDEKNTKLQELVLKNPSGSGPPLSIEDLGLNFQFCPSSRIYGFTAVDLKPSGEDEMITMDNAEEYVDLMFDFCMHTGIQKQMEAFRDGFNKVFPMEKLSSFSHEEVQMILCGNQSPSWAAEDIINYTEPKLGYTRDSPGFLRFVRVLCGMSSDERKAFLQFTTGCSTLPPGGLANLHPRLTVVRKVDATDASYPSVNTCVHYLKLPEYSSEEIMRERLLAATMEKGFHLN.

The interval Thr-246 to Asp-269 is disordered. Positions Arg-258–Asp-269 are enriched in polar residues. ANK repeat units lie at residues Val-395–Arg-424, Gln-426–Leu-455, Asp-459–Lys-491, and Ile-579–Leu-612. The segment at Val-489–Asp-513 is disordered. Residues Lys-491 to Asn-501 are compositionally biased toward basic and acidic residues. Disordered stretches follow at residues Leu-627–Gln-657 and Ser-707–Pro-748. Residues Ser-631 and Ser-640 each carry the phosphoserine modification. The segment covering Glu-639–Gln-657 has biased composition (basic and acidic residues). A compositionally biased stretch (low complexity) spans Ser-707–Ser-717. Basic and acidic residues predominate over residues Ser-718 to Gln-729. The MIB/HERC2 domain occupies Val-1266 to Tyr-1338. Disordered regions lie at residues Val-1343–Arg-1406 and Glu-1433–Ile-1483. Residues Pro-1348 to Lys-1365 are compositionally biased toward polar residues. Composition is skewed to low complexity over residues Ser-1373–Ser-1395 and Gly-1441–Glu-1458. Ser-1384 carries the phosphoserine modification. Polar residues predominate over residues Ser-1469 to Ile-1479. Position 1488 is a phosphoserine (Ser-1488). Residues Glu-1496–Arg-1515 are disordered. Ser-1567 is modified (phosphoserine). 2 disordered regions span residues Gly-1592–Ser-1611 and Glu-1674–Arg-1757. Residues Thr-1600–Ser-1611 are compositionally biased toward low complexity. Over residues Glu-1674 to Glu-1703 the composition is skewed to acidic residues. A Phosphothreonine modification is found at Thr-1760. Ser-1772 carries the phosphoserine modification. Positions Ala-1777 to Pro-1797 are disordered. Residues Phe-2029–Glu-2103 are K-box. Residues Ile-2151–Asn-2610 enclose the HECT domain. Residues His-2297–Ser-2318 are disordered. Ser-2318 carries the post-translational modification Phosphoserine. The Glycyl thioester intermediate role is filled by Cys-2579.

This sequence belongs to the UPL family. K-HECT subfamily. As to quaternary structure, interacts with IGSF1.

It catalyses the reaction S-ubiquitinyl-[E2 ubiquitin-conjugating enzyme]-L-cysteine + [acceptor protein]-L-lysine = [E2 ubiquitin-conjugating enzyme]-L-cysteine + N(6)-ubiquitinyl-[acceptor protein]-L-lysine.. The protein operates within protein modification; protein ubiquitination. E3 ubiquitin-protein ligase which accepts ubiquitin from an E2 ubiquitin-conjugating enzyme in the form of a thioester and then directly transfers the ubiquitin to targeted substrates. Mediates 'Lys-63'-linked polyubiquitination of HSP90AA1 which leads to its intracellular localization and reduced secretion. Negatively regulating HSP90AA1 secretion in cranial mesenchyme cells may impair their emigration and may be essential for the correct development of the cranial neural folds and neural tube closure. Catalyzes ubiquitination and degradation of ZNF622, an assembly factor for the ribosomal 60S subunit, in hematopoietic cells, thereby promoting hematopoietic stem cell renewal. The protein is E3 ubiquitin-protein ligase HECTD1 of Homo sapiens (Human).